The primary structure comprises 1063 residues: Integrin alpha-8 (1063 aa).

The N-terminal stretch at Met1 to Ala38 is a signal peptide. Topologically, residues Phe39–Leu1012 are extracellular. FG-GAP repeat units follow at residues Glu44–Gln105, Asn122–Glu183, Arg188–Tyr240, Lys253–Met306, Thr307–Arg372, Asp373–Thr431, and Gln435–Met498. Asn81 carries an N-linked (GlcNAc...) asparagine glycan. A disulfide bridge connects residues Cys96 and Cys106. Residue Asn122 is glycosylated (N-linked (GlcNAc...) asparagine). A disulfide bridge links Cys150 with Cys171. N-linked (GlcNAc...) asparagine glycosylation occurs at Asn177. A disulfide bridge links Cys187 with Cys200. N-linked (GlcNAc...) asparagine glycosylation occurs at Asn239. Ca(2+) is bound by residues Glu275, Thr277, Asp279, and Glu283. N-linked (GlcNAc...) asparagine glycosylation is found at Asn302 and Asn311. Asp329, Asn331, Asp333, Leu335, Asp337, Asp395, Asn397, Asp399, Tyr401, and Asp403 together coordinate Ca(2+). The Cell attachment site motif lies at Arg455–Asp457. Residues Asp459, Asp461, Asn463, Tyr465, and Asp467 each contribute to the Ca(2+) site. Asn504 is a glycosylation site (N-linked (GlcNAc...) asparagine). Disulfide bonds link Cys507/Cys518 and Cys524/Cys580. N-linked (GlcNAc...) asparagine glycans are attached at residues Asn601 and Asn605. 2 disulfide bridges follow: Cys641-Cys647 and Cys713-Cys726. Asn719, Asn737, Asn753, Asn780, Asn896, and Asn923 each carry an N-linked (GlcNAc...) asparagine glycan. 2 disulfide bridges follow: Cys867–Cys924 and Cys929–Cys934. An N-linked (GlcNAc...) asparagine glycan is attached at Asn1005. The helical transmembrane segment at Trp1013–Leu1033 threads the bilayer. The Cytoplasmic segment spans residues Trp1034 to Ala1063.

It belongs to the integrin alpha chain family. In terms of assembly, heterodimer of an alpha and a beta subunit. The alpha subunit is composed of a heavy and a light chain linked by a disulfide bond. Alpha-8 associates with beta-1. As to expression, expressed in mesenchymal cells, including alveolar myofibroblasts, kidney mesangial cells and hepatic stellar cells and vascular and visceral smooth muscle (at protein level).

It localises to the membrane. The protein resides in the cell membrane. Integrin alpha-8/beta-1 functions in the genesis of kidney and probably of other organs by regulating the recruitment of mesenchymal cells into epithelial structures. It recognizes the sequence R-G-D in a wide array of ligands including TNC, FN1, SPP1 TGFB1, TGFB3 and VTN. NPNT is probably its functional ligand in kidney genesis. Neuronal receptor for TNC it mediates cell-cell interactions and regulates neurite outgrowth of sensory and motor neurons. The sequence is that of Integrin alpha-8 (ITGA8) from Homo sapiens (Human).